A 346-amino-acid chain; its full sequence is Uracil-DNA glycosylase (346 aa).

The segment at 1–105 is disordered; the sequence is MSGKITDFFE…KLKNEEKSEE (105 aa). Residues 20–29 are compositionally biased toward basic and acidic residues; it reads AENKDNDKEL. Positions 30–42 are enriched in low complexity; that stretch reads TSTTTTTTTTSTT. A compositionally biased stretch (basic residues) spans 43 to 64; the sequence is SKKKVAAAPKKKAAVASKKRKH. Positions 67 to 86 are enriched in acidic residues; the sequence is SDEETDKEEQQNDDDDDGEE. Asp186 functions as the Proton acceptor in the catalytic mechanism.

The protein belongs to the uracil-DNA glycosylase (UDG) superfamily. UNG family.

The protein localises to the mitochondrion. Its subcellular location is the nucleus. It catalyses the reaction Hydrolyzes single-stranded DNA or mismatched double-stranded DNA and polynucleotides, releasing free uracil.. In terms of biological role, excises uracil residues from the DNA which can arise as a result of misincorporation of dUMP residues by DNA polymerase or due to deamination of cytosine. The sequence is that of Uracil-DNA glycosylase (uglA) from Dictyostelium discoideum (Social amoeba).